A 152-amino-acid chain; its full sequence is Alpha-amylase inhibitor BDAI-1 (152 aa).

Residues 1–30 form the signal peptide; that stretch reads MGAMWMKSMLLVLLLCMLMVTPMTGARSDN.

It belongs to the protease inhibitor I6 (cereal trypsin/alpha-amylase inhibitor) family. In terms of assembly, homodimer. Five disulfide bonds, which are essential for the inhibitor activity, are probably present. As to expression, endosperm.

The protein localises to the secreted. In terms of biological role, could be involved in insect defense mechanisms. Inhibits insect-type alpha-amylase. This is Alpha-amylase inhibitor BDAI-1 (IAD1) from Hordeum vulgare (Barley).